A 1267-amino-acid polypeptide reads, in one-letter code: DNA-directed RNA polymerase subunit beta'' (1267 aa).

Zn(2+) contacts are provided by Cys222, Cys290, Cys297, and Cys300.

The protein belongs to the RNA polymerase beta' chain family. RpoC2 subfamily. In terms of assembly, in plastids the minimal PEP RNA polymerase catalytic core is composed of four subunits: alpha, beta, beta', and beta''. When a (nuclear-encoded) sigma factor is associated with the core the holoenzyme is formed, which can initiate transcription. Zn(2+) is required as a cofactor.

The protein resides in the plastid. Its subcellular location is the chloroplast. It carries out the reaction RNA(n) + a ribonucleoside 5'-triphosphate = RNA(n+1) + diphosphate. DNA-dependent RNA polymerase catalyzes the transcription of DNA into RNA using the four ribonucleoside triphosphates as substrates. The protein is DNA-directed RNA polymerase subunit beta'' of Emiliania huxleyi (Coccolithophore).